Consider the following 232-residue polypeptide: Ashwin (232 aa).

2 stretches are compositionally biased toward basic and acidic residues: residues 64–97 (DLPK…DGLR) and 116–127 (KKTENGDNDRLR). Residues 64–232 (DLPKSRWGKM…KRKIQHVTWP (169 aa)) are disordered. Residues 130 to 140 (PQASATSNTFR) show a composition bias toward polar residues. Phosphoserine is present on serine 143. Positions 144–156 (DSSSSVSPLVLSS) are enriched in low complexity. Over residues 163–179 (KMEHGNNDNKQNHDLTH) the composition is skewed to basic and acidic residues. A phosphoserine mark is found at serine 182, serine 189, and serine 193. Threonine 198 is modified (phosphothreonine).

The protein belongs to the ashwin family. Component of the tRNA-splicing ligase complex.

Its subcellular location is the nucleus. The protein is Ashwin of Bos taurus (Bovine).